Consider the following 338-residue polypeptide: Phenylalanine--tRNA ligase alpha subunit (338 aa).

Glu-252 lines the Mg(2+) pocket.

The protein belongs to the class-II aminoacyl-tRNA synthetase family. Phe-tRNA synthetase alpha subunit type 1 subfamily. As to quaternary structure, tetramer of two alpha and two beta subunits. Mg(2+) serves as cofactor.

The protein localises to the cytoplasm. The enzyme catalyses tRNA(Phe) + L-phenylalanine + ATP = L-phenylalanyl-tRNA(Phe) + AMP + diphosphate + H(+). The polypeptide is Phenylalanine--tRNA ligase alpha subunit (Fusobacterium nucleatum subsp. nucleatum (strain ATCC 25586 / DSM 15643 / BCRC 10681 / CIP 101130 / JCM 8532 / KCTC 2640 / LMG 13131 / VPI 4355)).